The chain runs to 235 residues: Isoprenyl transferase (235 aa).

Residue Asp-21 is part of the active site. Residue Asp-21 participates in Mg(2+) binding. Substrate is bound by residues 22-25, Trp-26, Lys-34, His-38, and 66-68; these read GNAR and SSE. Residue Asn-69 is the Proton acceptor of the active site. Substrate is bound by residues Trp-70, Arg-72, Arg-183, and 189–191; that span reads RIS. Glu-202 lines the Mg(2+) pocket.

The protein belongs to the UPP synthase family. In terms of assembly, homodimer. The cofactor is Mg(2+).

Catalyzes the condensation of isopentenyl diphosphate (IPP) with allylic pyrophosphates generating different type of terpenoids. The protein is Isoprenyl transferase of Rickettsia conorii (strain ATCC VR-613 / Malish 7).